We begin with the raw amino-acid sequence, 939 residues long: Zinc finger RNA-binding protein 2 (939 aa).

Disordered stretches follow at residues 1–72 (MATS…AYGS), 116–185 (GRMT…IVTS), 217–264 (FYPP…PKAG), 289–314 (HLGG…SPRG), 360–389 (LEPA…ASSR), 401–449 (ALCE…DAQP), 545–590 (RLEE…SSDD), and 906–939 (RLGA…EGLV). Polar residues-rich tracts occupy residues 137–147 (PHGSHSHAQPP) and 157–184 (QPAS…SIVT). Pro residues predominate over residues 217-239 (FYPPAQPPPPPGPPQQLPPPPAP). Residues 516–549 (KVLEERMRKQRHLAEERLEQLRRWHAERRRLEEE) adopt a coiled-coil conformation. The DZF domain maps to 570-935 (RPESPASAPL…GEKKRGRRGG (366 aa)). The segment covering 906-916 (RLGARFRKRQR) has biased composition (basic residues).

The chain is Zinc finger RNA-binding protein 2 (ZFR2) from Homo sapiens (Human).